Consider the following 384-residue polypeptide: MLFSSLLVSTLVSVATAANQEVEAIQFSNLGFSGTYNQVEKLSNIYKDSCSCEVNKTPVSFSGTNAPLNEEVSVHFRGPLVLNKFASYVSDGFKYGDDSSGDWKRLSYYEGSSGTSENVTFLTSAGKNSSCLGIGLTYAGTDGISKADSSTVLAKNTLINSNDEFVIFSNISCGKSGYNNDCGVYRSDIPAYHGFYGTTKMFLFEFQMPNETHTSTDISNYNMPAIWLLNAHIPRTAQYSMNVNCSCWRSGCGEFDIFEVMNSTEYLHMYSTIHDYQGSDDIQTGMAAPAYIERDLTGTMSGGVAFDSSGNAVVWVSNSTSFDSTIQASSVNSWVKQAGADVATTLATVTGQSATTTSKKSGGVSYQPSFITNLLMTVLTLWVI.

The N-terminal stretch at 1–17 is a signal peptide; it reads MLFSSLLVSTLVSVATA. Asn118, Asn128, Asn170, Asn210, and Asn244 each carry an N-linked (GlcNAc...) asparagine glycan. The ExDxxE motif signature appears at 254-259; that stretch reads EFDIFE. Residues Asn262 and Asn318 are each glycosylated (N-linked (GlcNAc...) asparagine). A lipid anchor (GPI-anchor amidated serine) is attached at Ser361. Residues 362-384 constitute a propeptide, removed in mature form; the sequence is GGVSYQPSFITNLLMTVLTLWVI.

The protein belongs to the PGA52 family.

The protein resides in the cell membrane. It catalyses the reaction Hydrolysis of (1-&gt;3)-beta-D-glucosidic linkages in (1-&gt;3)-beta-D-glucans.. Functionally, probable circularly permuted 1,3-beta-glucanase involved in cell wall modification through beta-1,3-glucan network alterations such as increased branching or remodeling. The polypeptide is Probable circularly permuted 1,3-beta-glucanase PGA52 (PGA52) (Candida albicans (strain SC5314 / ATCC MYA-2876) (Yeast)).